The primary structure comprises 364 residues: Doublecortin domain-containing protein 2C (364 aa).

2 Doublecortin domains span residues 16 to 98 and 136 to 217; these read KTIV…LDYI and RHIN…FPYW. Residues 233–255 are disordered; sequence VEKNSQRKKKVDSKGKEPCKYDG.

Expressed in testis and spermatozoa (at protein level).

Its subcellular location is the cell projection. It is found in the cilium. It localises to the flagellum. The protein resides in the cytoplasm. In Homo sapiens (Human), this protein is Doublecortin domain-containing protein 2C.